The primary structure comprises 154 residues: UPF0178 protein SSP2038 (154 aa).

Belongs to the UPF0178 family.

In Staphylococcus saprophyticus subsp. saprophyticus (strain ATCC 15305 / DSM 20229 / NCIMB 8711 / NCTC 7292 / S-41), this protein is UPF0178 protein SSP2038.